The sequence spans 163 residues: Ribonuclease P protein component 4 (163 aa).

Residues Cys-66, Cys-69, Cys-96, and Cys-99 each coordinate Zn(2+). Residues 110-163 (GPRGGAPISPPAAEYGSGGRDSGEREDKGPQGPPRQGGRDNRQGGGHQGGPKGD) are disordered. The segment covering 152 to 163 (QGGGHQGGPKGD) has biased composition (gly residues).

This sequence belongs to the eukaryotic/archaeal RNase P protein component 4 family. In terms of assembly, consists of a catalytic RNA component and at least 4-5 protein subunits. Zn(2+) is required as a cofactor.

It is found in the cytoplasm. It catalyses the reaction Endonucleolytic cleavage of RNA, removing 5'-extranucleotides from tRNA precursor.. Functionally, part of ribonuclease P, a protein complex that generates mature tRNA molecules by cleaving their 5'-ends. The polypeptide is Ribonuclease P protein component 4 (Aeropyrum pernix (strain ATCC 700893 / DSM 11879 / JCM 9820 / NBRC 100138 / K1)).